A 212-amino-acid polypeptide reads, in one-letter code: Large ribosomal subunit protein uL3 (212 aa).

The segment at 131-155 is disordered; it reads RGNMTHGSKNHRLPGSTGAGTTPGR.

Belongs to the universal ribosomal protein uL3 family. As to quaternary structure, part of the 50S ribosomal subunit. Forms a cluster with proteins L14 and L19.

Its function is as follows. One of the primary rRNA binding proteins, it binds directly near the 3'-end of the 23S rRNA, where it nucleates assembly of the 50S subunit. The chain is Large ribosomal subunit protein uL3 from Microcystis aeruginosa (strain NIES-843 / IAM M-2473).